A 315-amino-acid chain; its full sequence is Long form salivary protein D7L2 (315 aa).

Residues 1 to 18 (MIVAPVVLSIFLQLFVQA) form the signal peptide. 4 disulfide bridges follow: Cys37/Cys73, Cys69/Cys128, Cys178/Cys211, and Cys252/Cys263.

It belongs to the PBP/GOBP family. Interacts with host coagulation factor XII/F12 (inactive and activated). Interacts with host coagulation factor XI/F11 (inactive).

Its subcellular location is the secreted. Functionally, modulates blood feeding of female mosquitoes on vertebrate species by binding and sequestering different mediators involved in the host response. Binds leukotriene B4 and leukotriene D4. Exhibits anticoagulant activity targeting the intrinsic coagulation pathway; binds coagulation factors XII and XI, preventing generation of activated FXIIa and FXIa. In Anopheles gambiae (African malaria mosquito), this protein is Long form salivary protein D7L2.